We begin with the raw amino-acid sequence, 177 residues long: Acireductone dioxygenase (177 aa).

Fe(2+) is bound by residues His99, His101, Glu105, and His143. The Ni(2+) site is built by His99, His101, Glu105, and His143.

This sequence belongs to the acireductone dioxygenase (ARD) family. As to quaternary structure, monomer. The cofactor is Fe(2+). Ni(2+) is required as a cofactor.

It catalyses the reaction 1,2-dihydroxy-5-(methylsulfanyl)pent-1-en-3-one + O2 = 3-(methylsulfanyl)propanoate + CO + formate + 2 H(+). The enzyme catalyses 1,2-dihydroxy-5-(methylsulfanyl)pent-1-en-3-one + O2 = 4-methylsulfanyl-2-oxobutanoate + formate + 2 H(+). Its pathway is amino-acid biosynthesis; L-methionine biosynthesis via salvage pathway; L-methionine from S-methyl-5-thio-alpha-D-ribose 1-phosphate: step 5/6. Catalyzes 2 different reactions between oxygen and the acireductone 1,2-dihydroxy-3-keto-5-methylthiopentene (DHK-MTPene) depending upon the metal bound in the active site. Fe-containing acireductone dioxygenase (Fe-ARD) produces formate and 2-keto-4-methylthiobutyrate (KMTB), the alpha-ketoacid precursor of methionine in the methionine recycle pathway. Ni-containing acireductone dioxygenase (Ni-ARD) produces methylthiopropionate, carbon monoxide and formate, and does not lie on the methionine recycle pathway. The chain is Acireductone dioxygenase from Leptospira borgpetersenii serovar Hardjo-bovis (strain L550).